Reading from the N-terminus, the 867-residue chain is Alanine--tRNA ligase (867 aa).

4 residues coordinate Zn(2+): H556, H560, C658, and H662.

Belongs to the class-II aminoacyl-tRNA synthetase family. It depends on Zn(2+) as a cofactor.

It localises to the cytoplasm. The enzyme catalyses tRNA(Ala) + L-alanine + ATP = L-alanyl-tRNA(Ala) + AMP + diphosphate. In terms of biological role, catalyzes the attachment of alanine to tRNA(Ala) in a two-step reaction: alanine is first activated by ATP to form Ala-AMP and then transferred to the acceptor end of tRNA(Ala). Also edits incorrectly charged Ser-tRNA(Ala) and Gly-tRNA(Ala) via its editing domain. The protein is Alanine--tRNA ligase of Fusobacterium nucleatum subsp. nucleatum (strain ATCC 25586 / DSM 15643 / BCRC 10681 / CIP 101130 / JCM 8532 / KCTC 2640 / LMG 13131 / VPI 4355).